We begin with the raw amino-acid sequence, 1607 residues long: Putative molluscan insulin-related peptide(s) receptor (1607 aa).

Positions 1 to 35 (MHPGSISFNMIINKCIPICLFILFIMMMEFTVSKA) are cleaved as a signal peptide. 17 N-linked (GlcNAc...) asparagine glycosylation sites follow: asparagine 82, asparagine 188, asparagine 245, asparagine 275, asparagine 332, asparagine 343, asparagine 495, asparagine 520, asparagine 663, asparagine 710, asparagine 778, asparagine 796, asparagine 802, asparagine 868, asparagine 879, asparagine 940, and asparagine 953. 3 Fibronectin type-III domains span residues 517-632 (HDLN…TYPF), 636-726 (EPTD…SKEE), and 756-861 (LPDE…TKDS). At 698–975 (EKVKIEEEGK…RPPDPESSNT (278 aa)) the chain is on the extracellular side. The Fibronectin type-III 4 domain maps to 870–967 (TTVDTEIETN…LERFFIVPRP (98 aa)). A helical membrane pass occupies residues 976-996 (LLIVAIVLAFFGVLTVSLIVA). The Cytoplasmic portion of the chain corresponds to 997–1607 (CVYYKQKIRS…WSTLKMVLVL (611 aa)). The Protein kinase domain occupies 1037-1308 (IKLIKELGQG…AIIEYLLPKL (272 aa)). Residues 1043 to 1051 (LGQGSFGMV) and lysine 1072 each bind ATP. Aspartate 1173 acts as the Proton acceptor in catalysis. Tyrosine 1199 is modified (phosphotyrosine; by autocatalysis). Disordered regions lie at residues 1328-1352 (GAGE…LSCE) and 1501-1539 (TLNG…SSSW). Residues 1503–1515 (NGNQSSHNNNSFE) show a composition bias toward polar residues. A compositionally biased stretch (low complexity) spans 1524–1538 (SGPASESSNGVSSSS).

It belongs to the protein kinase superfamily. Tyr protein kinase family. Insulin receptor subfamily. In terms of assembly, probable tetramer of 2 alpha and 2 beta chains linked by disulfide bonds. The alpha chains contribute to the formation of the ligand-binding domain, while the beta chains carry the kinase domain. The cofactor is Mn(2+).

The protein localises to the membrane. The catalysed reaction is L-tyrosyl-[protein] + ATP = O-phospho-L-tyrosyl-[protein] + ADP + H(+). In terms of biological role, this receptor probably binds to the four different molluscan insulin-related peptides and has a tyrosine-protein kinase activity. The chain is Putative molluscan insulin-related peptide(s) receptor from Lymnaea stagnalis (Great pond snail).